Reading from the N-terminus, the 2643-residue chain is Ankyrin repeat domain-containing protein 11 (2643 aa).

2 disordered regions span residues 1–90 (MPKG…KEPV) and 128–170 (SANS…RGET). Composition is skewed to basic and acidic residues over residues 21 to 54 (MVEKQTGKKDKDKVSLTKTPKLDRSDGGKEVRER) and 69 to 90 (EQKDSDTEKQGPERKRIKKEPV). The span at 128–155 (SANSPVDTTPKHPSQSTVCQKGTPNSAS) shows a compositional bias: polar residues. The span at 156–170 (KTKDKVNKRNERGET) shows a compositional bias: basic and acidic residues. 4 ANK repeats span residues 167–196 (RGETRLHRAAIRGDARRIKELISEGADVNV), 200–229 (AGWTALHEACNRGYYDIAKQLLAAGAEVNT), 233–262 (DDDTPLHDAANNGHYKVVKLLLRYGGNPQQ), and 266–292 (KGETPLKVANSPTMVNLLLGKGTYTSS). At S276 the chain carries Phosphoserine. The segment at 289–365 (YTSSEESSTE…DRVPPVDDKH (77 aa)) is disordered. The segment covering 295-305 (SSTESSEEEDA) has biased composition (acidic residues). Residues 309–320 (APSSSVDGNNTD) are compositionally biased toward polar residues. Composition is skewed to basic and acidic residues over residues 322-335 (EFEKGLKLKAKNPE) and 356-365 (DRVPPVDDKH). S408 carries the phosphoserine modification. Residue T410 is modified to Phosphothreonine. Phosphoserine is present on S411. Disordered stretches follow at residues 423-504 (GEKL…CLKG), 517-651 (SLSA…GQCS), and 727-805 (DANK…DKEK). A compositionally biased stretch (basic and acidic residues) spans 438–451 (KARESSSSRQQKEK). A compositionally biased stretch (basic residues) spans 452 to 462 (NKLKKKRKKET). Positions 463 to 475 (KGKEVRFGKRSDK) are enriched in basic and acidic residues. A compositionally biased stretch (acidic residues) spans 484–494 (ESSESEEDDGD). The span at 517-528 (SLSASSTSSHGS) shows a compositional bias: low complexity. Positions 537 to 550 (GHTDQHTKHWRTDN) are enriched in basic and acidic residues. Polar residues predominate over residues 557–574 (PAWSEVSSLSDSSRTGLT). Positions 575–588 (SESDCSSEGSSVES) are enriched in low complexity. Composition is skewed to basic residues over residues 591–602 (PTRRKQEHRKRG) and 633–646 (VKKHKTKHKHKHKE). Position 838 is a phosphoserine (S838). 2 stretches are compositionally biased toward basic and acidic residues: residues 918–931 (KNSEKRRDQTEKHK) and 938–962 (SEKDKKRRESAEGGRDRRDGRIRSE). 3 disordered regions span residues 918–962 (KNSE…IRSE), 977–1037 (SFKD…STLD), and 1051–1074 (EKKDGKEKHKDIHSKDRKASFDQL). At S1070 the chain carries Phosphoserine. Residue T1111 is modified to Phosphothreonine. S1114 carries the post-translational modification Phosphoserine. Disordered regions lie at residues 1114–1388 (SEDE…KDAS) and 1420–1711 (LFSS…TPSC). Basic and acidic residues-rich tracts occupy residues 1133–1297 (DTQR…DKIS), 1326–1343 (AEDKARDSACLSEKLREK), 1355–1388 (KSHERERAKKEKAEKKEKSEDYKDSISSVRKDAS), 1420–1444 (LFSSEKKDRSDPEREPAKRIEKELK), 1464–1535 (RERW…KGDS), 1546–1564 (VPSRDSGKKDSRPREKLLG), 1577–1587 (LSQKDLEIEER), and 1595–1640 (MKQM…KVKE). At S1676 the chain carries Phosphoserine. Residues 1678-1695 (RTEQSRPTGVPTPTSVVS) are compositionally biased toward polar residues. S1777 and S1832 each carry phosphoserine. A phosphotyrosine mark is found at Y1835 and Y1836. A phosphoserine mark is found at S1837 and S1844. Disordered stretches follow at residues 1863–1900 (PPDSVFSNLPPKSSPSPRGELLSPAIEGTLPPDLGLPL), 1981–2027 (SPKH…EVKD), and 2111–2386 (HEAF…STQQ). Phosphoserine is present on residues S1981 and S2139. Pro residues-rich tracts occupy residues 2150–2160 (PVPPAESPPGP) and 2175–2184 (EEPPAPPPQE). Over residues 2273 to 2284 (SAEASCVVAAAE) the composition is skewed to low complexity. Basic and acidic residues predominate over residues 2297 to 2315 (PEPKPTSEVPKAPKVEEVP). An important for protein degradation region spans residues 2349-2643 (AKGRASEEED…VNDDFVLLPA (295 aa)). Positions 2371–2386 (RSSQQLQQQLNTSTQQ) are enriched in low complexity.

In terms of assembly, interacts with the PAS region of the p160 coactivators. Subject to proteasomal degradation which is probably essential to regulate its activity.

The protein resides in the nucleus. Chromatin regulator which modulates histone acetylation and gene expression in neural precursor cells. May recruit histone deacetylases (HDACs) to the p160 coactivators/nuclear receptor complex to inhibit ligand-dependent transactivation. Has a role in proliferation and development of cortical neural precursors. May also regulate bone homeostasis. This Mus musculus (Mouse) protein is Ankyrin repeat domain-containing protein 11.